Here is a 401-residue protein sequence, read N- to C-terminus: MNQNNKHRTLLFRAALAAIAIAAAIFFWYQLKTPQQSSPSDQSSGLRHSPLPPVQVATAKEQAVPRFLAGLGTIQAANTATVTSRVEGQLIALHFQEGQQIKQGDLLAEIDPRPFQVQLAQAKGQLAKDEAILANARQDLNRYQKLANTHLISQQEMDNQRALVRQHEASLKVDQAAIDSAKLQLTYSRITAPISGKVGLKQIDVGNFISSGNSSSIVVITQTDPVDVLFSLPENDINAVLQAQKTNHDVVVSAWDRNNQQQLAAGKLLSIDNQIDATTGTIKLKARFSNQESILFPNQFVNVRIKVDTLENAVVIPNAALQMGNEGNFVWMLGKENKVSKHLVTVKLQDTKRVVISAGLAAGDKVVTDGIDRLTDGAKVDIVTPMVNKPQPQKHDQTENS.

The signal sequence occupies residues 1–20 (MNQNNKHRTLLFRAALAAIA).

It belongs to the membrane fusion protein (MFP) (TC 8.A.1) family. Part of a tripartite efflux system composed of MdtA, MdtB and MdtC.

It is found in the cell inner membrane. The sequence is that of Multidrug resistance protein MdtA from Photorhabdus laumondii subsp. laumondii (strain DSM 15139 / CIP 105565 / TT01) (Photorhabdus luminescens subsp. laumondii).